The following is a 246-amino-acid chain: Proteasome subunit alpha type-6 (246 aa).

It belongs to the peptidase T1A family. As to quaternary structure, the 26S proteasome consists of a 20S proteasome core and two 19S regulatory subunits. The 20S proteasome core is composed of 28 subunits that are arranged in four stacked rings, resulting in a barrel-shaped structure. The two end rings are each formed by seven alpha subunits, and the two central rings are each formed by seven beta subunits. The catalytic chamber with the active sites is on the inside of the barrel.

The protein resides in the cytoplasm. The protein localises to the nucleus. Its function is as follows. The proteasome is a multicatalytic proteinase complex which is characterized by its ability to cleave peptides with Arg, Phe, Tyr, Leu, and Glu adjacent to the leaving group at neutral or slightly basic pH. The proteasome has an ATP-dependent proteolytic activity. This is Proteasome subunit alpha type-6 (PAA1) from Nicotiana tabacum (Common tobacco).